Consider the following 517-residue polypeptide: Glutamate--tRNA ligase (517 aa).

Residues 10–20 carry the 'HIGH' region motif; that stretch reads PSPSGFLHVGG. 4 residues coordinate Zn(2+): cysteine 107, cysteine 109, cysteine 134, and aspartate 136. A 'KMSKS' region motif is present at residues 250–254; sequence KLSKR. Lysine 253 contributes to the ATP binding site.

It belongs to the class-I aminoacyl-tRNA synthetase family. Glutamate--tRNA ligase type 1 subfamily. As to quaternary structure, monomer. Zn(2+) serves as cofactor.

The protein resides in the cytoplasm. The catalysed reaction is tRNA(Glu) + L-glutamate + ATP = L-glutamyl-tRNA(Glu) + AMP + diphosphate. Its function is as follows. Catalyzes the attachment of glutamate to tRNA(Glu) in a two-step reaction: glutamate is first activated by ATP to form Glu-AMP and then transferred to the acceptor end of tRNA(Glu). The protein is Glutamate--tRNA ligase of Leptospira biflexa serovar Patoc (strain Patoc 1 / ATCC 23582 / Paris).